The primary structure comprises 500 residues: NAD(P)H-quinone oxidoreductase chain 4, chloroplastic (500 aa).

Helical transmembrane passes span 4–24 (FPWLTIIVFLPISAGSLLFFL), 31–51 (LIKWYTICICILELLLTTYAF), 87–107 (IGPILLTGFITTLATLAAWPV), 113–130 (LFHFLMLAMYSGQIGSFS), 134–154 (LLLFFIMWEFELIPVYLLLSM), 167–187 (FILYTAGGSVFLLIGVLGLGL), 208–228 (ALEIIFYIGFLIAFAVKSPII), 242–262 (HYSTCMLLAGILLKMGAYGLV), 272–292 (AHSIFSPWLIIVGTMQIIYAA), 305–325 (IAYSSVSHMGFIIIGIGSITD), 330–350 (GAILQIISHGFIGAALFFLAG), 386–406 (LALPGMSGFVAELIVFFGIIT), 416–436 (ILITFVMAIGMILTPIYSLSM), and 462–482 (LFVSISIFLPVIGIGIYPDFV).

This sequence belongs to the complex I subunit 4 family.

Its subcellular location is the plastid. It localises to the chloroplast thylakoid membrane. It carries out the reaction a plastoquinone + NADH + (n+1) H(+)(in) = a plastoquinol + NAD(+) + n H(+)(out). It catalyses the reaction a plastoquinone + NADPH + (n+1) H(+)(in) = a plastoquinol + NADP(+) + n H(+)(out). The sequence is that of NAD(P)H-quinone oxidoreductase chain 4, chloroplastic from Gossypium barbadense (Sea Island cotton).